The primary structure comprises 39 residues: Cytochrome b6-f complex subunit 5 (39 aa).

The helical transmembrane segment at 5–25 threads the bilayer; the sequence is LLCGIVLGLVPITLLGLFVSA.

It belongs to the PetG family. As to quaternary structure, the 4 large subunits of the cytochrome b6-f complex are cytochrome b6, subunit IV (17 kDa polypeptide, PetD), cytochrome f and the Rieske protein, while the 4 small subunits are PetG, PetL, PetM and PetN. The complex functions as a dimer.

Its subcellular location is the cellular thylakoid membrane. Its function is as follows. Component of the cytochrome b6-f complex, which mediates electron transfer between photosystem II (PSII) and photosystem I (PSI), cyclic electron flow around PSI, and state transitions. PetG is required for either the stability or assembly of the cytochrome b6-f complex. In Prochlorococcus marinus subsp. pastoris (strain CCMP1986 / NIES-2087 / MED4), this protein is Cytochrome b6-f complex subunit 5.